Consider the following 1193-residue polypeptide: DNA polymerase (1193 aa).

The disordered stretch occupies residues 1-88; sequence MALVQTHGSR…PAKKKRGTVV (88 aa). Over residues 48 to 68 the composition is skewed to low complexity; the sequence is PATTASGSRAAPTARRASSPP.

It belongs to the DNA polymerase type-B family. In terms of assembly, heterodimer with the terminal protein; this heterodimer binds to bp 9 to 18 of the genome. Forms a complex with viral pTP, DBP and hosts NFIA and POU2F1/OCT1 for initiation of replication.

The protein resides in the host nucleus. The enzyme catalyses DNA(n) + a 2'-deoxyribonucleoside 5'-triphosphate = DNA(n+1) + diphosphate. Eukaryotic-type DNA polymerase involved in viral genomic replication. DNA synthesis is protein primed, and acts in a strand displacement replication. Assembles in complex with viral pTP, DBP, host NFIA and host POU2F1/OCT1 on viral origin of replication. The polymerase covalently transfers dCMP onto pTP, thereby initiating complementary strand synthesis. The sequence is that of DNA polymerase from Homo sapiens (Human).